A 34-amino-acid polypeptide reads, in one-letter code: Photosystem II reaction center protein Psb30 (34 aa).

Residues 6 to 26 form a helical membrane-spanning segment; sequence VIGQLVSTGAIMLLGPAIIIL.

Belongs to the Psb30/Ycf12 family. PSII is composed of 1 copy each of membrane proteins PsbA, PsbB, PsbC, PsbD, PsbE, PsbF, PsbH, PsbI, PsbJ, PsbK, PsbL, PsbM, PsbT, PsbX, PsbY, PsbZ, Psb30/Ycf12, peripheral proteins of the oxygen-evolving complex and a large number of cofactors. It forms dimeric complexes.

It localises to the plastid. Its subcellular location is the chloroplast thylakoid membrane. Functionally, a core subunit of photosystem II (PSII), probably helps stabilize the reaction center. The polypeptide is Photosystem II reaction center protein Psb30 (Thalassiosira pseudonana (Marine diatom)).